The sequence spans 490 residues: Betaine aldehyde dehydrogenase (490 aa).

3 residues coordinate K(+): T26, I27, and D93. An NAD(+)-binding site is contributed by 150–152 (GAW). The active-site Charge relay system is the K162. 176-179 (KPSE) contributes to the NAD(+) binding site. K(+) is bound at residue V180. 230–233 (GVAS) lines the NAD(+) pocket. L246 contacts K(+). Residue E252 is the Proton acceptor of the active site. NAD(+) contacts are provided by G254, C286, and E387. Residue C286 is the Nucleophile of the active site. Position 286 is a cysteine sulfenic acid (-SOH) (C286). K(+) is bound by residues K457 and G460. E464 (charge relay system) is an active-site residue.

The protein belongs to the aldehyde dehydrogenase family. Dimer of dimers. Requires K(+) as cofactor.

The catalysed reaction is betaine aldehyde + NAD(+) + H2O = glycine betaine + NADH + 2 H(+). Its pathway is amine and polyamine biosynthesis; betaine biosynthesis via choline pathway; betaine from betaine aldehyde: step 1/1. In terms of biological role, involved in the biosynthesis of the osmoprotectant glycine betaine. Catalyzes the irreversible oxidation of betaine aldehyde to the corresponding acid. The polypeptide is Betaine aldehyde dehydrogenase (Escherichia coli (strain SMS-3-5 / SECEC)).